The primary structure comprises 123 residues: Small ribosomal subunit protein uS12 (123 aa).

D89 carries the post-translational modification 3-methylthioaspartic acid.

The protein belongs to the universal ribosomal protein uS12 family. In terms of assembly, part of the 30S ribosomal subunit. Contacts proteins S8 and S17. May interact with IF1 in the 30S initiation complex.

In terms of biological role, with S4 and S5 plays an important role in translational accuracy. Its function is as follows. Interacts with and stabilizes bases of the 16S rRNA that are involved in tRNA selection in the A site and with the mRNA backbone. Located at the interface of the 30S and 50S subunits, it traverses the body of the 30S subunit contacting proteins on the other side and probably holding the rRNA structure together. The combined cluster of proteins S8, S12 and S17 appears to hold together the shoulder and platform of the 30S subunit. This chain is Small ribosomal subunit protein uS12, found in Sinorhizobium medicae (strain WSM419) (Ensifer medicae).